The chain runs to 634 residues: Threonine--tRNA ligase (634 aa).

Positions 1 to 61 (MINITLPDGS…DHDASLRIIT (61 aa)) constitute a TGS domain. The tract at residues 243–534 (DHRRIGKAQD…LIEHHAGAFP (292 aa)) is catalytic. Residues Cys334, His385, and His511 each coordinate Zn(2+).

This sequence belongs to the class-II aminoacyl-tRNA synthetase family. As to quaternary structure, homodimer. Zn(2+) serves as cofactor.

The protein localises to the cytoplasm. The enzyme catalyses tRNA(Thr) + L-threonine + ATP = L-threonyl-tRNA(Thr) + AMP + diphosphate + H(+). Its function is as follows. Catalyzes the attachment of threonine to tRNA(Thr) in a two-step reaction: L-threonine is first activated by ATP to form Thr-AMP and then transferred to the acceptor end of tRNA(Thr). Also edits incorrectly charged L-seryl-tRNA(Thr). The polypeptide is Threonine--tRNA ligase (Xanthomonas axonopodis pv. citri (strain 306)).